A 342-amino-acid polypeptide reads, in one-letter code: Tetraacyldisaccharide 4'-kinase (342 aa).

Residue 68–75 (TVGGTGKT) participates in ATP binding.

It belongs to the LpxK family.

It carries out the reaction a lipid A disaccharide + ATP = a lipid IVA + ADP + H(+). The protein operates within glycolipid biosynthesis; lipid IV(A) biosynthesis; lipid IV(A) from (3R)-3-hydroxytetradecanoyl-[acyl-carrier-protein] and UDP-N-acetyl-alpha-D-glucosamine: step 6/6. Transfers the gamma-phosphate of ATP to the 4'-position of a tetraacyldisaccharide 1-phosphate intermediate (termed DS-1-P) to form tetraacyldisaccharide 1,4'-bis-phosphate (lipid IVA). The protein is Tetraacyldisaccharide 4'-kinase of Burkholderia cenocepacia (strain ATCC BAA-245 / DSM 16553 / LMG 16656 / NCTC 13227 / J2315 / CF5610) (Burkholderia cepacia (strain J2315)).